The sequence spans 149 residues: Nucleoside diphosphate kinase (149 aa).

ATP contacts are provided by Lys-9, Phe-57, Arg-85, Thr-91, Arg-102, and Asn-112. The active-site Pros-phosphohistidine intermediate is the His-115.

The protein belongs to the NDK family. Requires Mg(2+) as cofactor.

It is found in the cytoplasm. The enzyme catalyses a 2'-deoxyribonucleoside 5'-diphosphate + ATP = a 2'-deoxyribonucleoside 5'-triphosphate + ADP. It carries out the reaction a ribonucleoside 5'-diphosphate + ATP = a ribonucleoside 5'-triphosphate + ADP. In terms of biological role, major role in the synthesis of nucleoside triphosphates other than ATP. The ATP gamma phosphate is transferred to the NDP beta phosphate via a ping-pong mechanism, using a phosphorylated active-site intermediate. The protein is Nucleoside diphosphate kinase of Methanosarcina acetivorans (strain ATCC 35395 / DSM 2834 / JCM 12185 / C2A).